Consider the following 172-residue polypeptide: C-phycocyanin beta subunit (172 aa).

The residue at position 72 (Asn-72) is an N4-methylasparagine. Cys-82 and Cys-153 together coordinate (2R,3E)-phycocyanobilin.

It belongs to the phycobiliprotein family. As to quaternary structure, the alpha and beta subunits exhibit high affinity for one another and form heterodimers. These heterodimers form heterohexamers of 3 alpha and 3 beta subunits which, in turn, aggregate into a heterododecamer consisting of 2 heterohexamers. Contains two covalently linked bilin chromophores.

The protein resides in the cellular thylakoid membrane. Light-harvesting photosynthetic bile pigment-protein from the phycobiliprotein complex (phycobilisome, PBS). Phycocyanin is the major phycobiliprotein in the PBS rod. The sequence is that of C-phycocyanin beta subunit (cpcB) from Arthrospira platensis (Spirulina platensis).